Reading from the N-terminus, the 649-residue chain is Transcription factor tau 95 kDa subunit (649 aa).

Residues methionine 1 to alanine 21 form a disordered region. Residues threonine 9–aspartate 19 are compositionally biased toward polar residues. Copy 1 of the repeat occupies proline 221 to proline 239. The segment at proline 221–proline 419 is 2 X repeats, Pro-rich. Positions alanine 296 to lysine 300 match the Nuclear localization signal motif. Repeat unit 2 spans residues proline 400–proline 419. The disordered stretch occupies residues isoleucine 556–aspartate 612. Acidic residues-rich tracts occupy residues aspartate 560–threonine 584 and isoleucine 594–serine 610. The residue at position 617 (serine 617) is a Phosphoserine.

Belongs to the TFIIIC subunit 5 family. Component of the TFIIIC complex composed of TFC1, TFC3, TFC4, TFC6, TFC7 and TFC8. The subunits are organized in two globular domains, tauA and tauB, connected by a proteolysis-sensitive and flexible linker. Interacts with TFC3, TFC4 and TFC6.

The protein resides in the nucleus. In terms of biological role, TFIIIC mediates tRNA and 5S RNA gene activation by binding to intragenic promoter elements. Upstream of the transcription start site, TFIIIC assembles the initiation complex TFIIIB-TFIIIC-tDNA, which is sufficient for RNA polymerase III recruitment and function. Part of the tauA domain of TFIIIC that binds boxA DNA promoter sites of tRNA and similar genes. Participates in the interconnection of tauA with tauB via its contacts with TFC3 and TFC6. Serves as a scaffold critical for tauA-DNA spatial configuration and tauB-DNA stability. This chain is Transcription factor tau 95 kDa subunit (TFC1), found in Saccharomyces cerevisiae (strain ATCC 204508 / S288c) (Baker's yeast).